We begin with the raw amino-acid sequence, 389 residues long: Phospholipid phosphatase-related protein type 2 (389 aa).

Helical transmembrane passes span 14-34 (IIPCFVFVEILLGELARAFFP) and 66-86 (FLGVYSFGLFTTTIFANAGQV). Asparagine 102 is a glycosylation site (N-linked (GlcNAc...) asparagine). The next 3 helical transmembrane spans lie at 147-167 (AALCAYAVTYTAMYVTLVFRV), 176-196 (SLCLALLCPAFLVGVVRVAEY), and 203-223 (VLAGFLTGAAIATFLVTCVVH). 2 positions are modified to phosphoserine: serine 236 and serine 249. Disordered regions lie at residues 255–280 (SVAQEPEGCRSHSTPARLTPSKPQNC) and 295–351 (APAM…GRKL). Over residues 265–278 (SHSTPARLTPSKPQ) the composition is skewed to polar residues. The segment covering 314–339 (TPLPLPLPLPAPAPSQGPSPSSPGPG) has biased composition (pro residues).

Belongs to the PA-phosphatase related phosphoesterase family.

Its subcellular location is the membrane. The sequence is that of Phospholipid phosphatase-related protein type 2 from Bos taurus (Bovine).